The sequence spans 236 residues: Ribonuclease 3 (236 aa).

An RNase III domain is found at 6–140 (FLDFLKQNRI…FIGAVAQDQG (135 aa)). Residue glutamate 46 participates in Mg(2+) binding. Aspartate 50 is an active-site residue. Positions 126 and 129 each coordinate Mg(2+). Residue glutamate 129 is part of the active site. Residues 166-231 (DYKTIFQEQA…AKNAILKLDD (66 aa)) enclose the DRBM domain.

It belongs to the ribonuclease III family. As to quaternary structure, homodimer. Mg(2+) is required as a cofactor.

The protein resides in the cytoplasm. The enzyme catalyses Endonucleolytic cleavage to 5'-phosphomonoester.. Its function is as follows. Digests double-stranded RNA. Involved in the processing of primary rRNA transcript to yield the immediate precursors to the large and small rRNAs (23S and 16S). Processes some mRNAs, and tRNAs when they are encoded in the rRNA operon. Processes pre-crRNA and tracrRNA of type II CRISPR loci if present in the organism. This is Ribonuclease 3 from Ureaplasma parvum serovar 3 (strain ATCC 700970).